The sequence spans 445 residues: Tubulin beta-4 chain (445 aa).

The MREI motif signature appears at 1-4 (MREI). GTP contacts are provided by Q11, E69, S138, G142, T143, G144, N204, and N226. Position 69 (E69) interacts with Mg(2+). The tract at residues 425–445 (YQDATAEEEGEFEEGEEEENA) is disordered. The span at 429–445 (TAEEEGEFEEGEEEENA) shows a compositional bias: acidic residues. E438 is modified (5-glutamyl polyglutamate).

This sequence belongs to the tubulin family. Dimer of alpha and beta chains. A typical microtubule is a hollow water-filled tube with an outer diameter of 25 nm and an inner diameter of 15 nM. Alpha-beta heterodimers associate head-to-tail to form protofilaments running lengthwise along the microtubule wall with the beta-tubulin subunit facing the microtubule plus end conferring a structural polarity. Microtubules usually have 13 protofilaments but different protofilament numbers can be found in some organisms and specialized cells. Mg(2+) is required as a cofactor. Some glutamate residues at the C-terminus are polyglycylated, resulting in polyglycine chains on the gamma-carboxyl group. Glycylation is mainly limited to tubulin incorporated into axonemes (cilia and flagella) whereas glutamylation is prevalent in neuronal cells, centrioles, axonemes, and the mitotic spindle. Both modifications can coexist on the same protein on adjacent residues, and lowering polyglycylation levels increases polyglutamylation, and reciprocally. The precise function of polyglycylation is still unclear. In terms of processing, some glutamate residues at the C-terminus are polyglutamylated, resulting in polyglutamate chains on the gamma-carboxyl group. Polyglutamylation plays a key role in microtubule severing by spastin (SPAST). SPAST preferentially recognizes and acts on microtubules decorated with short polyglutamate tails: severing activity by SPAST increases as the number of glutamates per tubulin rises from one to eight, but decreases beyond this glutamylation threshold. As to expression, preferential expression in germ cells.

It localises to the cytoplasm. The protein localises to the cytoskeleton. Functionally, tubulin is the major constituent of microtubules, a cylinder consisting of laterally associated linear protofilaments composed of alpha- and beta-tubulin heterodimers. Microtubules grow by the addition of GTP-tubulin dimers to the microtubule end, where a stabilizing cap forms. Below the cap, tubulin dimers are in GDP-bound state, owing to GTPase activity of alpha-tubulin. In Xenopus laevis (African clawed frog), this protein is Tubulin beta-4 chain (tubb4).